The following is a 487-amino-acid chain: RCC1 repeat-containing protein DDB_G0284033 (487 aa).

5 RCC1 repeats span residues 66 to 127, 207 to 259, 260 to 313, 373 to 426, and 428 to 483; these read SNKV…FSGY, RSLI…ALSN, DGKL…ALTS, NGNI…IVET, and DGRF…SLNS.

In Dictyostelium discoideum (Social amoeba), this protein is RCC1 repeat-containing protein DDB_G0284033.